Here is a 36-residue protein sequence, read N- to C-terminus: Cecropin-D (36 aa).

K36 is subject to Lysine amide.

It belongs to the cecropin family.

It localises to the secreted. Its function is as follows. Cecropins have lytic and antibacterial activity against several Gram-positive and Gram-negative bacteria. In Antheraea pernyi (Chinese oak silk moth), this protein is Cecropin-D.